The primary structure comprises 68 residues: Large ribosomal subunit protein uL29 (68 aa).

This sequence belongs to the universal ribosomal protein uL29 family.

This is Large ribosomal subunit protein uL29 from Methanobrevibacter smithii (strain ATCC 35061 / DSM 861 / OCM 144 / PS).